A 548-amino-acid polypeptide reads, in one-letter code: T-complex protein 1 subunit theta (548 aa).

N-acetylalanine is present on alanine 2. At serine 23 the chain carries Phosphoserine. Tyrosine 30 bears the Phosphotyrosine mark. Tyrosine 47 and glycine 48 together coordinate ADP. A Mg(2+)-binding site is contributed by aspartate 99. ADP contacts are provided by glycine 100, threonine 101, asparagine 102, and phenylalanine 103. ATP contacts are provided by glycine 100, threonine 101, and asparagine 102. The residue at position 162 (serine 162) is a Phosphoserine. ADP is bound by residues methionine 169, serine 170, and lysine 171. ATP-binding residues include serine 170 and lysine 171. Glycyl lysine isopeptide (Lys-Gly) (interchain with G-Cter in SUMO2) cross-links involve residues lysine 224, lysine 254, and lysine 260. Residues serine 269 and serine 317 each carry the phosphoserine modification. 2 positions are modified to N6-acetyllysine: lysine 318 and lysine 400. Glycine 412 contributes to the ADP binding site. Position 412 (glycine 412) interacts with ATP. Lysine 459 is covalently cross-linked (Glycyl lysine isopeptide (Lys-Gly) (interchain with G-Cter in SUMO1)). An N6-acetyllysine modification is found at lysine 466. Aspartate 499 is an ADP binding site. Aspartate 499 and lysine 504 together coordinate ATP. The residue at position 505 (tyrosine 505) is a Phosphotyrosine. The tract at residues 529–548 (PAGGPKPPSGKKDWDEDQND) is disordered. Residue lysine 534 forms a Glycyl lysine isopeptide (Lys-Gly) (interchain with G-Cter in SUMO2) linkage. The residue at position 537 (serine 537) is a Phosphoserine. Residue lysine 539 forms a Glycyl lysine isopeptide (Lys-Gly) (interchain with G-Cter in SUMO2) linkage.

Belongs to the TCP-1 chaperonin family. As to quaternary structure, component of the chaperonin-containing T-complex (TRiC), a hexadecamer composed of two identical back-to-back stacked rings enclosing a protein folding chamber. Each ring is made up of eight different subunits: TCP1/CCT1, CCT2, CCT3, CCT4, CCT5, CCT6A/CCT6, CCT7, CCT8. Interacts with PACRG. Interacts with DNAAF4. Interacts with synaptic plasticity regulator PANTS.

The protein resides in the cytoplasm. It localises to the cytoskeleton. Its subcellular location is the microtubule organizing center. The protein localises to the centrosome. It is found in the cilium basal body. It catalyses the reaction ATP + H2O = ADP + phosphate + H(+). Its function is as follows. Component of the chaperonin-containing T-complex (TRiC), a molecular chaperone complex that assists the folding of actin, tubulin and other proteins upon ATP hydrolysis. The TRiC complex mediates the folding of WRAP53/TCAB1, thereby regulating telomere maintenance. As part of the TRiC complex may play a role in the assembly of BBSome, a complex involved in ciliogenesis regulating transports vesicles to the cilia. This is T-complex protein 1 subunit theta (CCT8) from Bos taurus (Bovine).